The chain runs to 94 residues: uncharacterized protein (94 aa).

This is an uncharacterized protein from Saccharolobus islandicus (Sulfolobus islandicus).